The chain runs to 161 residues: 3-isopropylmalate dehydratase small subunit (161 aa).

This sequence belongs to the LeuD family. LeuD type 2 subfamily. In terms of assembly, heterodimer of LeuC and LeuD.

It carries out the reaction (2R,3S)-3-isopropylmalate = (2S)-2-isopropylmalate. Its pathway is amino-acid biosynthesis; L-leucine biosynthesis; L-leucine from 3-methyl-2-oxobutanoate: step 2/4. In terms of biological role, catalyzes the isomerization between 2-isopropylmalate and 3-isopropylmalate, via the formation of 2-isopropylmaleate. The chain is 3-isopropylmalate dehydratase small subunit from Pyrobaculum islandicum (strain DSM 4184 / JCM 9189 / GEO3).